Here is a 96-residue protein sequence, read N- to C-terminus: Co-chaperonin GroES (96 aa).

Belongs to the GroES chaperonin family. In terms of assembly, heptamer of 7 subunits arranged in a ring. Interacts with the chaperonin GroEL.

It localises to the cytoplasm. Together with the chaperonin GroEL, plays an essential role in assisting protein folding. The GroEL-GroES system forms a nano-cage that allows encapsulation of the non-native substrate proteins and provides a physical environment optimized to promote and accelerate protein folding. GroES binds to the apical surface of the GroEL ring, thereby capping the opening of the GroEL channel. This chain is Co-chaperonin GroES, found in Cupriavidus taiwanensis (strain DSM 17343 / BCRC 17206 / CCUG 44338 / CIP 107171 / LMG 19424 / R1) (Ralstonia taiwanensis (strain LMG 19424)).